A 226-amino-acid chain; its full sequence is Neuron-specific vesicular protein calcyon (226 aa).

Positions 1-23 are disordered; sequence MVKLGCSFSGKPGKETGDQDGAA. The Extracellular portion of the chain corresponds to 1-88; the sequence is MVKLGCSFSG…EEGRRLPTAR (88 aa). A helical transmembrane segment spans residues 89-109; that stretch reads MIAFAMALLGCVLIMYKAIWY. At 110–226 the chain is on the cytoplasmic side; the sequence is DQFTCPDGFL…AEDVPSQSPK (117 aa). The disordered stretch occupies residues 189 to 226; sequence TAAAAAAAEGNEPSGKPLDMREKEDPQKAEDVPSQSPK. Positions 206–219 are enriched in basic and acidic residues; it reads LDMREKEDPQKAED.

The protein belongs to the NSG family. In terms of assembly, interacts with CLTA. Expressed exclusively in neurons (at protein level). In all age groups, expressed at significantly higher levels in the medial prefrontal and orbital frontal cortices of spontaneously hypertensive rats (SHR), a model of attention deficit-hyperactivity disorder, than Wistar Kyoto (WKY) animals. In the motor cortex, dorsal striatum and nucleus accumbens, expression is significantly elevated in SHR only in younger animals.

Its subcellular location is the cytoplasmic vesicle membrane. The protein resides in the cell membrane. Its function is as follows. Interacts with clathrin light chain A and stimulates clathrin self-assembly and clathrin-mediated endocytosis. The chain is Neuron-specific vesicular protein calcyon (Caly) from Rattus norvegicus (Rat).